We begin with the raw amino-acid sequence, 372 residues long: MNNEETFYQAMRRQGVTRRSFLKYCSLAATSLGLGAGMAPKIAWALENKPRIPVVWIHGLECTCCTESFIRSAHPLAKDVILSLISLDYDDTLMAAAGTQAEEVFEDIITQYNGKYILAVEGNPPLGEQGMFCISSGRPFIEKLKRAAAGASAIIAWGTCASWGCVQAARPNPTQATPIDKVITDKPIIKVPGCPPIPDVMSAIITYMVTFDRLPDVDRMGRPLMFYGQRIHDKCYRRAHFDAGEFVQSWDDDAARKGYCLYKMGCKGPTTYNACSSTRWNDGVSFPIQSGHGCLGCAENGFWDRGSFYSRVVDIPQMGTHSTADTVGLTALGVVAAAVGVHAVASSVDQRRRHNQQPTETEHQPGNEDKQA.

The segment at residues 1-45 (MNNEETFYQAMRRQGVTRRSFLKYCSLAATSLGLGAGMAPKIAWA) is a signal peptide (tat-type signal). At 46 to 325 (LENKPRIPVV…PQMGTHSTAD (280 aa)) the chain is on the periplasmic side. The [4Fe-4S] cluster site is built by Cys-62, Cys-65, Cys-160, Cys-194, His-232, Cys-235, Cys-260, and Cys-266. 3 residues coordinate [3Fe-4S] cluster: Cys-275, Cys-294, and Cys-297. Residues 326–346 (TVGLTALGVVAAAVGVHAVAS) traverse the membrane as a helical segment. A disordered region spans residues 346–372 (SSVDQRRRHNQQPTETEHQPGNEDKQA). Residues 347 to 372 (SVDQRRRHNQQPTETEHQPGNEDKQA) lie on the Cytoplasmic side of the membrane. The span at 360 to 372 (ETEHQPGNEDKQA) shows a compositional bias: basic and acidic residues.

Belongs to the [NiFe]/[NiFeSe] hydrogenase small subunit family. Heterodimer of a large and a small subunit. Requires [4Fe-4S] cluster as cofactor. [3Fe-4S] cluster is required as a cofactor. In terms of processing, predicted to be exported by the Tat system. The position of the signal peptide cleavage has not been experimentally proven.

The protein resides in the cell inner membrane. The enzyme catalyses H2 + A = AH2. Functionally, this is one of three S.flexneri hydrogenases synthesized in response to different physiological conditions. HYD1 is believed to have a role in hydrogen cycling during fermentative growth. In Shigella flexneri, this protein is Hydrogenase-1 small chain (hyaA).